The following is a 194-amino-acid chain: Probable thymidylate kinase (194 aa).

9-16 (GIDGVGKS) lines the ATP pocket.

It belongs to the thymidylate kinase family.

It carries out the reaction dTMP + ATP = dTDP + ADP. The protein is Probable thymidylate kinase of Methanopyrus kandleri (strain AV19 / DSM 6324 / JCM 9639 / NBRC 100938).